The following is a 438-amino-acid chain: Asparagine--tRNA ligase (438 aa).

Belongs to the class-II aminoacyl-tRNA synthetase family. Homodimer.

The protein resides in the cytoplasm. It catalyses the reaction tRNA(Asn) + L-asparagine + ATP = L-asparaginyl-tRNA(Asn) + AMP + diphosphate + H(+). The protein is Asparagine--tRNA ligase of Thermus thermophilus (strain ATCC BAA-163 / DSM 7039 / HB27).